Here is an 823-residue protein sequence, read N- to C-terminus: Nuclear factor I family protein (823 aa).

The disordered stretch occupies residues 1-56 (MEPHLKIDVSSASGSTTTGATASTSEAPQDSQAQQTMPPPSSDWSNQFNSPEAVSP). Low complexity predominate over residues 10 to 25 (SSASGSTTTGATASTS). The span at 26 to 52 (EAPQDSQAQQTMPPPSSDWSNQFNSPE) shows a compositional bias: polar residues. The CTF/NF-I DNA-binding region spans 61-253 (IKCFSPYSQE…DVDTKITLTY (193 aa)). Disordered regions lie at residues 364 to 408 (PYPI…NDEV), 433 to 468 (SRTQ…AFRS), and 777 to 823 (APPA…NEKK). A compositionally biased stretch (basic and acidic residues) spans 386–396 (PSEKRSRDISS). The span at 433 to 447 (SRTQQNQGAPGTSRQ) shows a compositional bias: polar residues. The segment covering 777 to 794 (APPACSPSSSNSSLGAAN) has biased composition (low complexity).

The protein belongs to the CTF/NF-I family. As to expression, expressed in muscles, neurons and intestinal cells.

Its subcellular location is the nucleus. Functionally, probable transcription factor which recognizes and binds the palindromic sequence 5'-TTGGCANNNTGCCAA-3' present in promoters. Plays a role in locomotion, pharyngeal pumping, egg-laying, and life span. The sequence is that of Nuclear factor I family protein from Caenorhabditis elegans.